Consider the following 256-residue polypeptide: Large ribosomal subunit protein eL8A (256 aa).

The interval 1–37 (MAPGKKVAPAPFGAKSTKSNKTRNPLTHSTPKNFGIG) is disordered. The segment covering 16–32 (STKSNKTRNPLTHSTPK) has biased composition (polar residues).

It belongs to the eukaryotic ribosomal protein eL8 family. In terms of assembly, component of the large ribosomal subunit (LSU). Mature yeast ribosomes consist of a small (40S) and a large (60S) subunit. The 40S small subunit contains 1 molecule of ribosomal RNA (18S rRNA) and 33 different proteins (encoded by 57 genes). The large 60S subunit contains 3 rRNA molecules (25S, 5.8S and 5S rRNA) and 46 different proteins (encoded by 81 genes).

It localises to the cytoplasm. Functionally, component of the ribosome, a large ribonucleoprotein complex responsible for the synthesis of proteins in the cell. The small ribosomal subunit (SSU) binds messenger RNAs (mRNAs) and translates the encoded message by selecting cognate aminoacyl-transfer RNA (tRNA) molecules. The large subunit (LSU) contains the ribosomal catalytic site termed the peptidyl transferase center (PTC), which catalyzes the formation of peptide bonds, thereby polymerizing the amino acids delivered by tRNAs into a polypeptide chain. The nascent polypeptides leave the ribosome through a tunnel in the LSU and interact with protein factors that function in enzymatic processing, targeting, and the membrane insertion of nascent chains at the exit of the ribosomal tunnel. The chain is Large ribosomal subunit protein eL8A from Saccharomyces cerevisiae (strain ATCC 204508 / S288c) (Baker's yeast).